The following is a 114-amino-acid chain: ATP synthase subunit beta, mitochondrial (114 aa).

An ATP-binding site is contributed by 44-51 (GGAGVGKT).

The protein belongs to the ATPase alpha/beta chains family. F-type ATPases have 2 components, CF(1) - the catalytic core - and CF(0) - the membrane proton channel. CF(1) has five subunits: alpha(3), beta(3), gamma(1), delta(1), epsilon(1). CF(0) has three main subunits: a, b and c.

It is found in the mitochondrion. It localises to the mitochondrion inner membrane. It carries out the reaction ATP + H2O + 4 H(+)(in) = ADP + phosphate + 5 H(+)(out). Its function is as follows. Mitochondrial membrane ATP synthase (F(1)F(0) ATP synthase or Complex V) produces ATP from ADP in the presence of a proton gradient across the membrane which is generated by electron transport complexes of the respiratory chain. F-type ATPases consist of two structural domains, F(1) - containing the extramembraneous catalytic core, and F(0) - containing the membrane proton channel, linked together by a central stalk and a peripheral stalk. During catalysis, ATP synthesis in the catalytic domain of F(1) is coupled via a rotary mechanism of the central stalk subunits to proton translocation. Subunits alpha and beta form the catalytic core in F(1). Rotation of the central stalk against the surrounding alpha(3)beta(3) subunits leads to hydrolysis of ATP in three separate catalytic sites on the beta subunits. The protein is ATP synthase subunit beta, mitochondrial (atp2) of Penicillium glabrum (Penicillium frequentans).